A 186-amino-acid polypeptide reads, in one-letter code: ATP synthase subunit delta, chloroplastic (186 aa).

Belongs to the ATPase delta chain family. In terms of assembly, F-type ATPases have 2 components, F(1) - the catalytic core - and F(0) - the membrane proton channel. F(1) has five subunits: alpha(3), beta(3), gamma(1), delta(1), epsilon(1). CF(0) has four main subunits: a(1), b(1), b'(1) and c(10-14). The alpha and beta chains form an alternating ring which encloses part of the gamma chain. F(1) is attached to F(0) by a central stalk formed by the gamma and epsilon chains, while a peripheral stalk is formed by the delta, b and b' chains.

It is found in the plastid. It localises to the chloroplast thylakoid membrane. Functionally, f(1)F(0) ATP synthase produces ATP from ADP in the presence of a proton or sodium gradient. F-type ATPases consist of two structural domains, F(1) containing the extramembraneous catalytic core and F(0) containing the membrane proton channel, linked together by a central stalk and a peripheral stalk. During catalysis, ATP synthesis in the catalytic domain of F(1) is coupled via a rotary mechanism of the central stalk subunits to proton translocation. In terms of biological role, this protein is part of the stalk that links CF(0) to CF(1). It either transmits conformational changes from CF(0) to CF(1) or is implicated in proton conduction. The sequence is that of ATP synthase subunit delta, chloroplastic from Pyropia yezoensis (Susabi-nori).